Reading from the N-terminus, the 157-residue chain is Protein E6 (157 aa).

2 zinc fingers span residues 39 to 75 (CNFCGKFLDFLEVCDFDKKQLTLIWKGHFVTACCRSC) and 112 to 148 (CQTCLSFLDTIEKLDSCGRGLPFHKVRDRWKGICRQC).

This sequence belongs to the papillomaviridae E6 protein family. In terms of assembly, forms homodimers. Interacts with ubiquitin-protein ligase UBE3A/E6-AP; this interaction stimulates UBE3A ubiquitin activity. Interacts with host BAK1.

The protein localises to the host cytoplasm. Its subcellular location is the host nucleus. Functionally, plays a major role in the induction and maintenance of cellular transformation. E6 associates with host UBE3A/E6-AP ubiquitin-protein ligase and modulates its activity. Protects host keratinocytes from apoptosis by mediating the degradation of host BAK1. May also inhibit host immune response. This Homo sapiens (Human) protein is Protein E6.